The chain runs to 199 residues: Recombination protein RecR (199 aa).

Residues 57–72 (CAECRTFTEEEVCHIC) form a C4-type zinc finger. One can recognise a Toprim domain in the interval 81 to 176 (GQICVVESPA…EASRIAHGVP (96 aa)).

The protein belongs to the RecR family.

In terms of biological role, may play a role in DNA repair. It seems to be involved in an RecBC-independent recombinational process of DNA repair. It may act with RecF and RecO. The protein is Recombination protein RecR of Vibrio parahaemolyticus serotype O3:K6 (strain RIMD 2210633).